We begin with the raw amino-acid sequence, 391 residues long: Ferrochelatase (391 aa).

The Fe cation site is built by histidine 196 and glutamate 281.

This sequence belongs to the ferrochelatase family.

It is found in the cytoplasm. It catalyses the reaction heme b + 2 H(+) = protoporphyrin IX + Fe(2+). The protein operates within porphyrin-containing compound metabolism; protoheme biosynthesis; protoheme from protoporphyrin-IX: step 1/1. Functionally, catalyzes the ferrous insertion into protoporphyrin IX. The chain is Ferrochelatase from Prochlorococcus marinus (strain NATL1A).